Consider the following 427-residue polypeptide: Tumor necrosis factor receptor superfamily member 16 (427 aa).

The N-terminal stretch at 1 to 31 (MRRAGAACSAMDRLRLLLLLLLLLGVSFGGA) is a signal peptide. The Extracellular segment spans residues 32-254 (KETCSTGMYT…VVTRGTADNL (223 aa)). TNFR-Cys repeat units follow at residues 34-67 (TCSTGMYTHSGECCKACNLGEGVAQPCGANQTVC), 69-110 (PCLD…DAVC), 111-149 (RCSYGYYQDEETGRCEACSVCGVGSGLVFSCQDKQNTVC), and 151-191 (ECPE…DAEC). 12 cysteine pairs are disulfide-bonded: C35-C46, C47-C60, C50-C67, C70-C86, C89-C102, C92-C110, C112-C125, C128-C141, C131-C149, C152-C167, C170-C183, and C173-C191. N-linked (GlcNAc...) asparagine glycosylation is present at N63. The tract at residues 197 to 223 (RWITRSTPPEGSDVTTPSTQEPEAPPE) is disordered. Polar residues predominate over residues 200–217 (TRSTPPEGSDVTTPSTQE). The chain crosses the membrane as a helical span at residues 255-275 (IPVYCSILAAVVVGLVAYIAF). Residues 276-427 (KRWNSCKQNK…CSESTATSPV (152 aa)) lie on the Cytoplasmic side of the membrane. Polar residues-rich tracts occupy residues 284 to 294 (NKQGANSRPVN) and 308 to 329 (SGISVDSQSLHDQQTHTQTASG). Positions 284-334 (NKQGANSRPVNQTPPPEGEKLHSDSGISVDSQSLHDQQTHTQTASGQALKG) are disordered. S314 carries the phosphoserine modification. The tract at residues 329-344 (GQALKGDGNLYSSLPL) is mediates interaction with KIDINS220. The Death domain occupies 356–421 (GDTWRHLAGE…DIVESLCSES (66 aa)).

Homodimer; disulfide-linked. Heterodimer with SORCS2. The extracellular domains of the heterodimer bind NGF. The cytoplasmic region of the heterodimer binds TRIO. NGF binding mediates dissociation of TRIO from the receptor complex. Interacts with TRAF2, TRAF4, TRAF6, PTPN13 and RANBP9. Interacts through TRAF6 with SQSTM1 which bridges NGFR to NTRK1. Interacts with BEX1. Interacts with BEX3. Interacts with KIDINS220 and NTRK1. Can form a ternary complex with NTRK1 and KIDINS220 and this complex is affected by the expression levels of KIDINS220. An increase in KIDINS220 expression leads to a decreased association of NGFR and NTRK1. Interacts (via death domain) with RAB31. Interacts with NTRK2; may regulate the ligand specificity of the NTRK2 receptor. Interacts with LINGO1. Interacts with NRADD. Interacts with MAGED1; the interaction antagonizes the association NGFR:NTRK1. Interacts with RTN4R. Interacts (via death domain) with ARHGDIA and RIPK2. Interacts with BFAR. In terms of assembly, (Microbial infection) Binds to rabies virus glycoprotein Gs. Post-translationally, N-glycosylated. O-glycosylated. Phosphorylated on serine residues. As to expression, detected in Schwann cells. Detected in embryonic brain, in hippocampus neurons (at protein level). Detected in brain and spinal cord.

It localises to the cell membrane. The protein resides in the cytoplasm. The protein localises to the perikaryon. It is found in the cell projection. Its subcellular location is the growth cone. It localises to the dendritic spine. Its function is as follows. Low affinity neurotrophin receptor which can bind to mature NGF, BDNF, NTF3, and NTF4. Forms a heterodimeric receptor with SORCS2 that binds the precursor forms of NGF (proNGF), BDNF (proBDNF) and NTF3 (proNT3) with high affinity, and has much lower affinity for mature NGF and BDNF. Plays an important role in differentiation and survival of specific neuronal populations during development. Can mediate cell survival as well as cell death of neural cells. The heterodimeric receptor formed with SORCS2 plays a role in proBDNF-dependent synaptic plasticity, in hippocampal long term depression (LTD) and long term potentiation (LTP). Plays a role in the inactivation of RHOA. Plays a role in the regulation of the translocation of GLUT4 to the cell surface in adipocytes and skeletal muscle cells in response to insulin, probably by regulating RAB31 activity, and thereby contributes to the regulation of insulin-dependent glucose uptake. Necessary for the circadian oscillation of the clock genes BMAL1, PER1, PER2 and NR1D1 in the suprachiasmatic nucleus (SCN) of the brain and in liver and of the genes involved in glucose and lipid metabolism in the liver. Functionally, (Microbial infection) Cell surface receptor for rabies virus glycoprotein Gs. In terms of biological role, does not bind NGF, BDNF, NTF3, and NTF4. This Mus musculus (Mouse) protein is Tumor necrosis factor receptor superfamily member 16 (Ngfr).